The following is a 203-amino-acid chain: Ribosomal RNA small subunit methyltransferase G (203 aa).

Residues Gly-73, Leu-78, 124–125 (VE), and Arg-138 contribute to the S-adenosyl-L-methionine site.

It belongs to the methyltransferase superfamily. RNA methyltransferase RsmG family.

The protein localises to the cytoplasm. It catalyses the reaction guanosine(527) in 16S rRNA + S-adenosyl-L-methionine = N(7)-methylguanosine(527) in 16S rRNA + S-adenosyl-L-homocysteine. Specifically methylates the N7 position of guanine in position 527 of 16S rRNA. In Haemophilus ducreyi (strain 35000HP / ATCC 700724), this protein is Ribosomal RNA small subunit methyltransferase G.